The following is a 199-amino-acid chain: Peptidyl-tRNA hydrolase (199 aa).

Tyrosine 18 provides a ligand contact to tRNA. Histidine 23 serves as the catalytic Proton acceptor. 3 residues coordinate tRNA: tyrosine 69, asparagine 71, and asparagine 117.

This sequence belongs to the PTH family. As to quaternary structure, monomer.

The protein localises to the cytoplasm. It carries out the reaction an N-acyl-L-alpha-aminoacyl-tRNA + H2O = an N-acyl-L-amino acid + a tRNA + H(+). Hydrolyzes ribosome-free peptidyl-tRNAs (with 1 or more amino acids incorporated), which drop off the ribosome during protein synthesis, or as a result of ribosome stalling. Functionally, catalyzes the release of premature peptidyl moieties from peptidyl-tRNA molecules trapped in stalled 50S ribosomal subunits, and thus maintains levels of free tRNAs and 50S ribosomes. The sequence is that of Peptidyl-tRNA hydrolase from Prochlorococcus marinus (strain MIT 9515).